The following is a 458-amino-acid chain: tRNA modification GTPase MnmE (458 aa).

(6S)-5-formyl-5,6,7,8-tetrahydrofolate contacts are provided by Arg-22, Glu-84, and Arg-123. Residues 220–379 (GIATAIIGRP…LEKAIADLFF (160 aa)) form the TrmE-type G domain. Residue Asn-230 participates in K(+) binding. GTP-binding positions include 230–235 (NVGKSS), 249–255 (TDIAGTT), and 274–277 (DTAG). Ser-234 contributes to the Mg(2+) binding site. 3 residues coordinate K(+): Thr-249, Ile-251, and Thr-254. Position 255 (Thr-255) interacts with Mg(2+). Lys-458 is a binding site for (6S)-5-formyl-5,6,7,8-tetrahydrofolate.

Belongs to the TRAFAC class TrmE-Era-EngA-EngB-Septin-like GTPase superfamily. TrmE GTPase family. As to quaternary structure, homodimer. Heterotetramer of two MnmE and two MnmG subunits. It depends on K(+) as a cofactor.

The protein localises to the cytoplasm. Exhibits a very high intrinsic GTPase hydrolysis rate. Involved in the addition of a carboxymethylaminomethyl (cmnm) group at the wobble position (U34) of certain tRNAs, forming tRNA-cmnm(5)s(2)U34. The sequence is that of tRNA modification GTPase MnmE from Bacillus cereus (strain ATCC 14579 / DSM 31 / CCUG 7414 / JCM 2152 / NBRC 15305 / NCIMB 9373 / NCTC 2599 / NRRL B-3711).